Reading from the N-terminus, the 427-residue chain is 3-phosphoshikimate 1-carboxyvinyltransferase (427 aa).

Residues Lys22, Ser23, and Arg27 each coordinate 3-phosphoshikimate. Residue Lys22 participates in phosphoenolpyruvate binding. Residues Gly93 and Arg122 each contribute to the phosphoenolpyruvate site. Positions 167, 169, 315, and 342 each coordinate 3-phosphoshikimate. Position 169 (Gln169) interacts with phosphoenolpyruvate. The active-site Proton acceptor is the Asp315. Positions 346 and 387 each coordinate phosphoenolpyruvate.

This sequence belongs to the EPSP synthase family. As to quaternary structure, monomer.

The protein resides in the cytoplasm. It carries out the reaction 3-phosphoshikimate + phosphoenolpyruvate = 5-O-(1-carboxyvinyl)-3-phosphoshikimate + phosphate. The protein operates within metabolic intermediate biosynthesis; chorismate biosynthesis; chorismate from D-erythrose 4-phosphate and phosphoenolpyruvate: step 6/7. In terms of biological role, catalyzes the transfer of the enolpyruvyl moiety of phosphoenolpyruvate (PEP) to the 5-hydroxyl of shikimate-3-phosphate (S3P) to produce enolpyruvyl shikimate-3-phosphate and inorganic phosphate. In Thermus thermophilus (strain ATCC 27634 / DSM 579 / HB8), this protein is 3-phosphoshikimate 1-carboxyvinyltransferase.